The sequence spans 291 residues: MKSSILLDGKAISEKIRNRIQETLAKAKAEGKGIPTLATILVGNNPASETYVNMKVKACEKVGMHSRYIRLKEETTTEELLGEIRKLNLDPSINGILLQHPVPHQIDERKAFDEIALEKDVDGVTTISFGKLSMNSEAYYPCTPYGMVLLLQEYGIDVTGKHAVVVGRSPILGKPMAIMLTNLNATVTLCHSKTEDLPSLVKQADIIVGAVGKPEFIKAEWMKEGVVILDAGYNVGNVGDIEVSKAKDKSSYYTPVPGGVGPMTISVLLLQTMYSFLGQFSPKLESHVANR.

Residues 167 to 169 (GRS) and S192 contribute to the NADP(+) site.

This sequence belongs to the tetrahydrofolate dehydrogenase/cyclohydrolase family. As to quaternary structure, homodimer.

It carries out the reaction (6R)-5,10-methylene-5,6,7,8-tetrahydrofolate + NADP(+) = (6R)-5,10-methenyltetrahydrofolate + NADPH. The enzyme catalyses (6R)-5,10-methenyltetrahydrofolate + H2O = (6R)-10-formyltetrahydrofolate + H(+). It functions in the pathway one-carbon metabolism; tetrahydrofolate interconversion. In terms of biological role, catalyzes the oxidation of 5,10-methylenetetrahydrofolate to 5,10-methenyltetrahydrofolate and then the hydrolysis of 5,10-methenyltetrahydrofolate to 10-formyltetrahydrofolate. In Leptospira biflexa serovar Patoc (strain Patoc 1 / Ames), this protein is Bifunctional protein FolD.